Consider the following 114-residue polypeptide: T cell receptor beta variable 3-1 (114 aa).

The signal sequence occupies residues 1 to 21 (MGCRLLCCVVFCLLQAGPLDT). An Ig-like domain is found at 22 to 114 (AVSQTPKYLV…SAVYFCASSQ (93 aa)). Cysteines 42 and 110 form a disulfide. The N-linked (GlcNAc...) asparagine glycan is linked to N76.

Alpha-beta TR is a heterodimer composed of an alpha and beta chain; disulfide-linked. The alpha-beta TR is associated with the transmembrane signaling CD3 coreceptor proteins to form the TR-CD3 (TcR or TCR). The assembly of alpha-beta TR heterodimers with CD3 occurs in the endoplasmic reticulum where a single alpha-beta TR heterodimer associates with one CD3D-CD3E heterodimer, one CD3G-CD3E heterodimer and one CD247 homodimer forming a stable octameric structure. CD3D-CD3E and CD3G-CD3E heterodimers preferentially associate with TR alpha and TR beta chains, respectively. The association of the CD247 homodimer is the last step of TcR assembly in the endoplasmic reticulum and is required for transport to the cell surface.

It localises to the cell membrane. V region of the variable domain of T cell receptor (TR) beta chain that participates in the antigen recognition. Alpha-beta T cell receptors are antigen specific receptors which are essential to the immune response and are present on the cell surface of T lymphocytes. Recognize peptide-major histocompatibility (MH) (pMH) complexes that are displayed by antigen presenting cells (APC), a prerequisite for efficient T cell adaptive immunity against pathogens. Binding of alpha-beta TR to pMH complex initiates TR-CD3 clustering on the cell surface and intracellular activation of LCK that phosphorylates the ITAM motifs of CD3G, CD3D, CD3E and CD247 enabling the recruitment of ZAP70. In turn ZAP70 phosphorylates LAT, which recruits numerous signaling molecules to form the LAT signalosome. The LAT signalosome propagates signal branching to three major signaling pathways, the calcium, the mitogen-activated protein kinase (MAPK) kinase and the nuclear factor NF-kappa-B (NF-kB) pathways, leading to the mobilization of transcription factors that are critical for gene expression and essential for T cell growth and differentiation. The T cell repertoire is generated in the thymus, by V-(D)-J rearrangement. This repertoire is then shaped by intrathymic selection events to generate a peripheral T cell pool of self-MH restricted, non-autoaggressive T cells. Post-thymic interaction of alpha-beta TR with the pMH complexes shapes TR structural and functional avidity. The protein is T cell receptor beta variable 3-1 of Homo sapiens (Human).